The sequence spans 321 residues: D-alanine--D-alanine ligase (321 aa).

Residues 103–303 (KKILTPENIP…YVALCRMIVE (201 aa)) form the ATP-grasp domain. Residue 129–186 (PLPRPYVLKPVNEGSSVGVAIIDESFNDGQPIRKDQIDPWKNFKTLLAEPFIKGRELT) participates in ATP binding. Positions 254, 270, and 272 each coordinate Mg(2+).

This sequence belongs to the D-alanine--D-alanine ligase family. It depends on Mg(2+) as a cofactor. The cofactor is Mn(2+).

The protein resides in the cytoplasm. It carries out the reaction 2 D-alanine + ATP = D-alanyl-D-alanine + ADP + phosphate + H(+). Its pathway is cell wall biogenesis; peptidoglycan biosynthesis. Cell wall formation. This is D-alanine--D-alanine ligase from Zymomonas mobilis subsp. mobilis (strain ATCC 31821 / ZM4 / CP4).